The following is a 102-amino-acid chain: Small ribosomal subunit protein uS10 (102 aa).

This sequence belongs to the universal ribosomal protein uS10 family. As to quaternary structure, part of the 30S ribosomal subunit.

In terms of biological role, involved in the binding of tRNA to the ribosomes. The polypeptide is Small ribosomal subunit protein uS10 (Streptococcus sanguinis (strain SK36)).